The following is a 309-amino-acid chain: tRNA dimethylallyltransferase (309 aa).

9-16 (GPTAVGKT) serves as a coordination point for ATP. 11 to 16 (TAVGKT) provides a ligand contact to substrate. The interaction with substrate tRNA stretch occupies residues 34 to 37 (DSMQ).

The protein belongs to the IPP transferase family. Monomer. Requires Mg(2+) as cofactor.

The enzyme catalyses adenosine(37) in tRNA + dimethylallyl diphosphate = N(6)-dimethylallyladenosine(37) in tRNA + diphosphate. Its function is as follows. Catalyzes the transfer of a dimethylallyl group onto the adenine at position 37 in tRNAs that read codons beginning with uridine, leading to the formation of N6-(dimethylallyl)adenosine (i(6)A). The chain is tRNA dimethylallyltransferase from Enterococcus faecalis (strain ATCC 700802 / V583).